A 554-amino-acid chain; its full sequence is Potassium-transporting ATPase potassium-binding subunit (554 aa).

Transmembrane regions (helical) follow at residues 1–21 (MSPVLAGVLQLVALIAALALA), 60–80 (PAYLRGVLAFSAVSVLFLYVL), 131–151 (GLAVQNFVSASVGIAVAVALV), 174–194 (VRVLLPVSVIAAIVLVACGAI), 246–266 (PGPFSNLFEIFLILLIPFALT), 279–299 (GYAILATMVTIWIGFTALMMW), 375–395 (GLYGILIMAVIAVFIAGLMVG), 412–432 (FAACYILITPALALVFTAAAM), 481–501 (IGIVMLLGRFVPMVFVLALAG), and 525–545 (GLLVGAILIITGLTYFPALAL).

Belongs to the KdpA family. In terms of assembly, the system is composed of three essential subunits: KdpA, KdpB and KdpC.

The protein localises to the cell membrane. In terms of biological role, part of the high-affinity ATP-driven potassium transport (or Kdp) system, which catalyzes the hydrolysis of ATP coupled with the electrogenic transport of potassium into the cytoplasm. This subunit binds the extracellular potassium ions and delivers the ions to the membrane domain of KdpB through an intramembrane tunnel. The chain is Potassium-transporting ATPase potassium-binding subunit from Streptomyces avermitilis (strain ATCC 31267 / DSM 46492 / JCM 5070 / NBRC 14893 / NCIMB 12804 / NRRL 8165 / MA-4680).